A 214-amino-acid polypeptide reads, in one-letter code: Large ribosomal subunit protein uL1 (214 aa).

It belongs to the universal ribosomal protein uL1 family. In terms of assembly, component of the large ribosomal subunit.

It localises to the cytoplasm. Functionally, component of the large ribosomal subunit. The ribosome is a large ribonucleoprotein complex responsible for the synthesis of proteins in the cell. The protein is Large ribosomal subunit protein uL1 (RPL10A) of Entamoeba histolytica (strain ATCC 30459 / HM-1:IMSS / ABRM).